The sequence spans 530 residues: Rho GTPase-activating protein 36 (530 aa).

Positions 1-19 are cleaved as a signal peptide; the sequence is MPPLLLLSALIFLVNVLGG. A Rho-GAP domain is found at 209 to 409; sequence MSLNPIAKQI…AMIDNWDVLF (201 aa). Positions 471-512 are disordered; sequence GQSKPFDEGSSEEPAVPPGTARSHDDEEGAGNPLILEQDRPL.

May interacts (via the Rho-GAP domain) with the active form of RAC1.

GTPase activator for the Rho-type GTPases by converting them to an inactive GDP-bound state. In Bos taurus (Bovine), this protein is Rho GTPase-activating protein 36 (ARHGAP36).